The primary structure comprises 135 residues: Small ribosomal subunit protein uS12 (135 aa).

Positions 1 to 23 (MPTINQLVRKGRHSKTTKSDSPA) are disordered. Asp102 carries the post-translational modification 3-methylthioaspartic acid.

The protein belongs to the universal ribosomal protein uS12 family. As to quaternary structure, part of the 30S ribosomal subunit. Contacts proteins S8 and S17. May interact with IF1 in the 30S initiation complex.

Functionally, with S4 and S5 plays an important role in translational accuracy. Interacts with and stabilizes bases of the 16S rRNA that are involved in tRNA selection in the A site and with the mRNA backbone. Located at the interface of the 30S and 50S subunits, it traverses the body of the 30S subunit contacting proteins on the other side and probably holding the rRNA structure together. The combined cluster of proteins S8, S12 and S17 appears to hold together the shoulder and platform of the 30S subunit. In Lactobacillus gasseri (strain ATCC 33323 / DSM 20243 / BCRC 14619 / CIP 102991 / JCM 1131 / KCTC 3163 / NCIMB 11718 / NCTC 13722 / AM63), this protein is Small ribosomal subunit protein uS12.